A 98-amino-acid chain; its full sequence is MPLKPEEHEDILNKLLDPELAQSERTEALQQLRVNYGSFVSEYNDLTKSHEKLAAEKDDLIVSNSKLFRQIGLTDKQEEDHKKADISETITIEDLEAK.

Residues 40-62 (VSEYNDLTKSHEKLAAEKDDLIV) are a coiled coil.

This sequence belongs to the phi29likevirus scaffolding protein family. As to quaternary structure, homodimer. Interacts non-specifically with DNA; probably binds DNA in the early stages of DNA packaging.

Its function is as follows. Scaffolding protein involved in the icosahedric procapsid assembly. Coassembles with the capsid proteins to form the procapsid. The scaffolding protein is found within the capsid as a serie of concentric shells. During DNA packaging, the scaffolding protein molecules are released from the procapsid. The protein is Capsid assembly scaffolding protein (7) of Bacillus subtilis (Bacteriophage phi-29).